Here is a 42-residue protein sequence, read N- to C-terminus: Photosystem I reaction center subunit IX (42 aa).

The chain crosses the membrane as a helical span at residues 7-27; sequence YLSTAPVLATLWFGFLAGLLI.

The protein belongs to the PsaJ family.

The protein resides in the plastid. It is found in the chloroplast thylakoid membrane. May help in the organization of the PsaE and PsaF subunits. The sequence is that of Photosystem I reaction center subunit IX from Marchantia polymorpha (Common liverwort).